Reading from the N-terminus, the 293-residue chain is Methylsterol monooxygenase 1 (293 aa).

2 consecutive transmembrane segments (helical) span residues 55-75 (LIVH…FQFI) and 100-120 (VLLF…YYFT). The Fatty acid hydroxylase domain occupies 145 to 274 (CAVIEDTWHY…FTWWDRIFGT (130 aa)). The Histidine box-1 motif lies at 157–161 (HRLLH). Residues 170 to 174 (HKIHH) carry the Histidine box-2 motif. A helical transmembrane segment spans residues 199–219 (FFIGIMLLCDHVILLWAWVTV). Positions 249 to 255 (HHDFHHM) match the Histidine box-3 motif.

It belongs to the sterol desaturase family. It depends on Fe cation as a cofactor. Post-translationally, ubiquitinated by MARCHF6, leading to proteasomal degradation.

The protein resides in the endoplasmic reticulum membrane. It catalyses the reaction 4,4-dimethyl-5alpha-cholest-7-en-3beta-ol + 6 Fe(II)-[cytochrome b5] + 3 O2 + 5 H(+) = 4alpha-carboxy-4beta-methyl-5alpha-cholest-7-ene-3beta-ol + 6 Fe(III)-[cytochrome b5] + 4 H2O. The enzyme catalyses 4,4-dimethyl-5alpha-cholesta-8,24-dien-3beta-ol + 6 Fe(II)-[cytochrome b5] + 3 O2 + 5 H(+) = 4beta-methylzymosterol-4alpha-carboxylate + 6 Fe(III)-[cytochrome b5] + 4 H2O. It carries out the reaction 4alpha-methylzymosterol + 6 Fe(II)-[cytochrome b5] + 3 O2 + 5 H(+) = 4alpha-carboxyzymosterol + 6 Fe(III)-[cytochrome b5] + 4 H2O. The catalysed reaction is 4alpha-methyl-5alpha-cholest-7-en-3beta-ol + 6 Fe(II)-[cytochrome b5] + 3 O2 + 5 H(+) = 4alpha-carboxy-5alpha-cholest-7-en-3beta-ol + 6 Fe(III)-[cytochrome b5] + 4 H2O. It catalyses the reaction 4,4-dimethyl-5alpha-cholest-8-en-3beta-ol + 6 Fe(II)-[cytochrome b5] + 3 O2 + 5 H(+) = 4alpha-carboxy-4beta-methyl-5alpha-cholest-8-en-3beta-ol + 6 Fe(III)-[cytochrome b5] + 4 H2O. The enzyme catalyses 4alpha-methyl-5alpha-cholest-8-en-3beta-ol + 6 Fe(II)-[cytochrome b5] + 3 O2 + 5 H(+) = 4alpha-carboxy-5alpha-cholest-8-ene-3beta-ol + 6 Fe(III)-[cytochrome b5] + 4 H2O. Its pathway is steroid biosynthesis; zymosterol biosynthesis; zymosterol from lanosterol: step 3/6. It functions in the pathway steroid biosynthesis; cholesterol biosynthesis. Its function is as follows. Catalyzes the three-step monooxygenation required for the demethylation of 4,4-dimethyl and 4alpha-methylsterols, which can be subsequently metabolized to cholesterol. This chain is Methylsterol monooxygenase 1 (MSMO1), found in Sus scrofa (Pig).